We begin with the raw amino-acid sequence, 1116 residues long: Pleckstrin homology domain-containing family A member 5 (1116 aa).

At alanine 2 the chain carries N-acetylalanine. Residues 10-43 enclose the WW 1 domain; sequence ISLPRSWTYGITRGGRVFFINEEAKSTTWLHPVT. At serine 55 the chain carries Phosphoserine. The 34-residue stretch at 56-89 folds into the WW 2 domain; that stretch reads TDLPTGWEEAYTFEGARYYINHNERKVTCKHPVT. A disordered region spans residues 140 to 163; the sequence is SPVGRTSRASKKVHNFGKRSNSIK. The segment covering 147–156 has biased composition (basic residues); it reads RASKKVHNFG. The region spanning 169–268 is the PH domain; the sequence is PVVRRGWLYK…WMKAMLDAAL (100 aa). A Glycyl lysine isopeptide (Lys-Gly) (interchain with G-Cter in SUMO2) cross-link involves residue lysine 301. A phosphoserine mark is found at serine 382 and serine 410. Phosphothreonine occurs at positions 438 and 460. Residues 459-495 form a disordered region; sequence RTLPRNSKTRPESICSVTPSTHDKTLGPGAEEKRRSM. The span at 479–495 shows a compositional bias: basic and acidic residues; the sequence is THDKTLGPGAEEKRRSM. A phosphoserine mark is found at serine 568, serine 607, serine 809, serine 855, serine 933, and serine 937. 2 disordered regions span residues 928-978 and 1025-1116; these read GASD…PATE and RNKD…FMCV. Positions 930–949 are enriched in polar residues; sequence SDQSPLQSPSNLRDNPFRTT. The span at 952–978 shows a compositional bias: basic and acidic residues; it reads RRRDDKELDTAIRENDVKPDHETPATE. Positions 1036–1046 are enriched in polar residues; sequence FSPQDETQTAN. Residues 1047-1061 show a composition bias toward basic and acidic residues; it reads HKPEEHPEENTKNSV. Residues 1070–1085 show a composition bias toward polar residues; it reads SYESTPEVSRGNQTMA. Positions 1088-1101 are enriched in low complexity; the sequence is SLSPSPESSASPVP.

In terms of tissue distribution, highly expressed in heart and kidney.

It localises to the cytoplasm. The polypeptide is Pleckstrin homology domain-containing family A member 5 (PLEKHA5) (Homo sapiens (Human)).